Here is an 815-residue protein sequence, read N- to C-terminus: MPAPHGLSPLSKAFLMRRAFQRRILPHSLAMALSLPLAGYVQAQEVEFDIPPQALGSALQEFGRQADIQVLYRPEEVRNKRSSAIKGKLEPNQAITELLRGTGASVDFQGNAITISVAEAADSSVDLGATMITSNQLGTITEDSGSYTPGTIATATRLVLTPRETPQSITVVTRQNMDDFGLNNIDDVMRHTPGITVSAYDTDRNNYYARGFSINNFQYDGIPSTARNVGYSAGNTLSDMAIYDRVEVLKGATGLLTGAGSLGATINLIRKKPTHEFKGHVELGAGSWDNYRSELDVSGPLTESGNVRGRAVAAYQDKHSFMDHYERKTSVYYGILEFDLNPDTMLTVGADYQDNDPKGSGWSGSFPLFDSQGNRNDVSRSFNNGAKWSSWEQYTRTVFANLEHNFANGWVGKVQLDHKINGYHAPLGAIMGDWPAPDNSAKIVAQKYTGETKSNSLDIYLTGPFQFLGREHELVVGTSASFSHWEGKSYWNLRNYDNTTDDFINWDGDIGKPDWGTPSQYIDDKTRQLGSYMTARFNVTDDLNLFLGGRVVDYRVTGLNPTIRESGRFIPYVGAVYDLNDTYSVYASYTDIFMPQDSWYRDSSNKLLEPDEGQNYEIGIKGEYLDGRLNTSLAYFEIHEENRAEEDALYNSKPTNPAITYAYKGIKAKTKGYEAEISGELAPGWQVQAGYTHKIIRDDSGKKVSTWEPQDQLSLYTSYKFKGALDKLTVGGGARWQGKSWQMVYNNPRSRWEKFSQEDYWLVDLMARYQITDKLSASVNVNNVFDKTYYTNIGFYTSASYGDPRNLMFSTRWDF.

The first 43 residues, 1–43, serve as a signal peptide directing secretion; the sequence is MPAPHGLSPLSKAFLMRRAFQRRILPHSLAMALSLPLAGYVQA. Positions 161–271 constitute a TBDR plug domain; that stretch reads TPRETPQSIT…LGATINLIRK (111 aa). Residues 276 to 815 enclose the TBDR beta-barrel domain; it reads EFKGHVELGA…NLMFSTRWDF (540 aa). The short motif at 798 to 815 is the TonB C-terminal box element; the sequence is SASYGDPRNLMFSTRWDF.

This sequence belongs to the TonB-dependent receptor family.

The protein localises to the cell outer membrane. Functionally, receptor for the siderophore ferripyoverdine. In Pseudomonas aeruginosa (strain ATCC 15692 / DSM 22644 / CIP 104116 / JCM 14847 / LMG 12228 / 1C / PRS 101 / PAO1), this protein is Ferripyoverdine receptor (fpvA).